The primary structure comprises 141 residues: Probable trafficking protein particle complex subunit 2 (141 aa).

The protein belongs to the TRAPP small subunits family. Sedlin subfamily. Part of the multisubunit TRAPP (transport protein particle) complex.

It is found in the cytoplasm. Its subcellular location is the perinuclear region. The protein localises to the endoplasmic reticulum. The protein resides in the golgi apparatus. Its function is as follows. May play a role in vesicular transport from endoplasmic reticulum to Golgi. Required for the systemic spread of the RNAi response. The sequence is that of Probable trafficking protein particle complex subunit 2 (sedl-1) from Caenorhabditis elegans.